The chain runs to 418 residues: Translation initiation factor 2 subunit gamma (418 aa).

The region spanning 7 to 206 (QPEVNIGVVG…GIQKYIPTPQ (200 aa)) is the tr-type G domain. Residues 16-23 (GHVDHGKT) form a G1 region. 4 residues coordinate Mg(2+): Asp19, Thr23, Gly44, and Thr46. Residue 19 to 24 (DHGKTT) coordinates GTP. The interval 44–48 (GMTIK) is G2. Positions 59, 62, 74, and 77 each coordinate Zn(2+). Residues 93-96 (DAPG) are G3. GTP contacts are provided by residues 149 to 152 (NKVD) and 184 to 186 (SAL). The G4 stretch occupies residues 149–152 (NKVD). The segment at 184-186 (SAL) is G5.

It belongs to the TRAFAC class translation factor GTPase superfamily. Classic translation factor GTPase family. EIF2G subfamily. As to quaternary structure, heterotrimer composed of an alpha, a beta and a gamma chain. Mg(2+) serves as cofactor.

The enzyme catalyses GTP + H2O = GDP + phosphate + H(+). Functionally, eIF-2 functions in the early steps of protein synthesis by forming a ternary complex with GTP and initiator tRNA. This Sulfurisphaera tokodaii (strain DSM 16993 / JCM 10545 / NBRC 100140 / 7) (Sulfolobus tokodaii) protein is Translation initiation factor 2 subunit gamma.